The following is a 552-amino-acid chain: Macrophage colony-stimulating factor 1 (552 aa).

Residues 1-32 form the signal peptide; it reads MTARGAAGRCPSSTWLGSRLLLVCLLMSRSIA. The Extracellular segment spans residues 33–492; it reads KEVSEHCSHM…EGSSDPQIPE (460 aa). 3 cysteine pairs are disulfide-bonded: Cys-39–Cys-122, Cys-80–Cys-171, and Cys-134–Cys-178. Asn-107, Asn-154, and Asn-172 each carry an N-linked (GlcNAc...) asparagine glycan. Low complexity predominate over residues 197–207; sequence TPSSDPASASP. A disordered region spans residues 197-293; it reads TPSSDPASAS…GGPVPGVEDI (97 aa). Positions 254–267 are enriched in polar residues; sequence PRSTCQTLESTEQP. Basic and acidic residues predominate over residues 268 to 278; sequence NHGDRLTEDSQ. Ser-308 is a glycosylation site (O-linked (Xyl...) (chondroitin sulfate) serine). Disordered stretches follow at residues 321–412 and 439–465; these read KFSP…RVSN and GKRS…ARPV. 3 stretches are compositionally biased toward basic and acidic residues: residues 350-364, 382-396, and 439-450; these read STED…DRPL, EKTD…DHQE, and GKRSTRDRRSPA. Thr-360 carries O-linked (GalNAc...) threonine glycosylation. Residues 493–515 form a helical membrane-spanning segment; sequence SVFHLLVPGIILVLLTVGGLLFY. Topologically, residues 516–552 are cytoplasmic; that stretch reads KWKWRSHRDPQTLDSSVGRPEDSSLTQDEDRQVELPV. The segment at 525 to 552 is disordered; sequence PQTLDSSVGRPEDSSLTQDEDRQVELPV. Basic and acidic residues predominate over residues 543–552; the sequence is DEDRQVELPV.

In terms of assembly, homodimer or heterodimer; disulfide-linked. Likely to exist in multiple forms: homodimer consisting of 2 identical 150-200 kDa proteoglycan subunits, heterodimer consisting of a 150-200 kDa proteoglycan subunit and a truncated 43 kDa subunit, and homodimer consisting of 2 identical 43 kDa subunits. Interacts with CSF1R. In terms of processing, N-glycosylated. O-glycosylated; contains chondroitin sulfate.

The protein resides in the cell membrane. Its subcellular location is the secreted. It is found in the extracellular space. Its function is as follows. Cytokine that plays an essential role in the regulation of survival, proliferation and differentiation of hematopoietic precursor cells, especially mononuclear phagocytes, such as macrophages and monocytes. Promotes the release of pro-inflammatory chemokines, and thereby plays an important role in innate immunity and in inflammatory processes. Plays an important role in the regulation of osteoclast proliferation and differentiation, the regulation of bone resorption, and is required for normal bone development. Required for normal male and female fertility. Promotes reorganization of the actin cytoskeleton, regulates formation of membrane ruffles, cell adhesion and cell migration. Plays a role in lipoprotein clearance. This chain is Macrophage colony-stimulating factor 1 (Csf1), found in Mus musculus (Mouse).